A 288-amino-acid polypeptide reads, in one-letter code: Cyclin-dependent kinase 2 homolog (288 aa).

Residues 4 to 284 (YHGLEKIGEG…AKQALEHAYF (281 aa)) form the Protein kinase domain. ATP-binding positions include 10–18 (IGEGTYGVV) and lysine 32. Threonine 14 carries the phosphothreonine modification. Tyrosine 15 bears the Phosphotyrosine mark. Catalysis depends on aspartate 125, which acts as the Proton acceptor. Phosphothreonine is present on threonine 158.

This sequence belongs to the protein kinase superfamily. CMGC Ser/Thr protein kinase family. CDC2/CDKX subfamily. May form a complex composed of at least the catalytic subunit CRK2 and a cyclin. Mg(2+) serves as cofactor. Post-translationally, autophosphorylates in presence of cyclin cyc-1 but not in presence of cyclin cyc-3.

The protein localises to the cytoplasm. The enzyme catalyses L-seryl-[protein] + ATP = O-phospho-L-seryl-[protein] + ADP + H(+). The catalysed reaction is L-threonyl-[protein] + ATP = O-phospho-L-threonyl-[protein] + ADP + H(+). It catalyses the reaction [DNA-directed RNA polymerase] + ATP = phospho-[DNA-directed RNA polymerase] + ADP + H(+). With respect to regulation, phosphorylation at Thr-14 or Tyr-15 inactivates the enzyme, while phosphorylation at Thr-158 activates it. Activated by cyclin cyc-1 in vitro. Activated by cyclin cyc-3 in vitro. In terms of biological role, serine/threonine-protein kinase. Involved in the control of the cell cycle. Required for entry into S-phase and mitosis. Probable component of the kinase complex that phosphorylates the repetitive C-terminus of RNA polymerase II. In schizonts, phosphorylates ORC1 resulting in its dissociation from DNA, relocalization to the cytoplasm and likely its degradation. The sequence is that of Cyclin-dependent kinase 2 homolog from Plasmodium falciparum (isolate 3D7).